The sequence spans 204 residues: Large ribosomal subunit protein bL25 (204 aa).

The protein belongs to the bacterial ribosomal protein bL25 family. CTC subfamily. As to quaternary structure, part of the 50S ribosomal subunit; part of the 5S rRNA/L5/L18/L25 subcomplex. Contacts the 5S rRNA. Binds to the 5S rRNA independently of L5 and L18.

Functionally, this is one of the proteins that binds to the 5S RNA in the ribosome where it forms part of the central protuberance. The sequence is that of Large ribosomal subunit protein bL25 from Pseudomonas syringae pv. syringae (strain B728a).